A 591-amino-acid chain; its full sequence is Aspartate--tRNA(Asp/Asn) ligase (591 aa).

Position 174 (Glu174) interacts with L-aspartate. The tract at residues 198-201 (QLFK) is aspartate. Arg220 lines the L-aspartate pocket. ATP is bound by residues 220-222 (RDE) and Gln229. Residue His450 coordinates L-aspartate. Glu483 is an ATP binding site. Arg490 provides a ligand contact to L-aspartate. 535 to 538 (GLDR) provides a ligand contact to ATP.

This sequence belongs to the class-II aminoacyl-tRNA synthetase family. Type 1 subfamily. As to quaternary structure, homodimer.

The protein localises to the cytoplasm. The catalysed reaction is tRNA(Asx) + L-aspartate + ATP = L-aspartyl-tRNA(Asx) + AMP + diphosphate. Aspartyl-tRNA synthetase with relaxed tRNA specificity since it is able to aspartylate not only its cognate tRNA(Asp) but also tRNA(Asn). Reaction proceeds in two steps: L-aspartate is first activated by ATP to form Asp-AMP and then transferred to the acceptor end of tRNA(Asp/Asn). The sequence is that of Aspartate--tRNA(Asp/Asn) ligase from Pseudomonas aeruginosa (strain LESB58).